Here is a 177-residue protein sequence, read N- to C-terminus: Bifunctional protein PyrR (177 aa).

The PRPP-binding signature appears at 98–110 (IILVDDVIYTGRT).

This sequence belongs to the purine/pyrimidine phosphoribosyltransferase family. PyrR subfamily. In terms of assembly, homodimer and homohexamer; in equilibrium.

The enzyme catalyses UMP + diphosphate = 5-phospho-alpha-D-ribose 1-diphosphate + uracil. In terms of biological role, regulates transcriptional attenuation of the pyrimidine nucleotide (pyr) operon by binding in a uridine-dependent manner to specific sites on pyr mRNA. This disrupts an antiterminator hairpin in the RNA and favors formation of a downstream transcription terminator, leading to a reduced expression of downstream genes. Its function is as follows. Also displays a weak uracil phosphoribosyltransferase activity which is not physiologically significant. The chain is Bifunctional protein PyrR from Clostridium kluyveri (strain ATCC 8527 / DSM 555 / NBRC 12016 / NCIMB 10680 / K1).